Consider the following 402-residue polypeptide: MAYPGQGGHHYQSTHGGGGGGFPAPHGYAQPGYGYAPPSGPPQGYQSGGGYAPPMQPPPGGVQGQMGYGFAPPSGPIGPPEYATNHVNYNPQGGMIGNQRYEYSSMQGKRKALLIGINYFGQNGELRGCINDVRNVQNFLRQRGYKDDDMVVLTDDQRDARSIPTRQNMTAAMHWLVRGAQPGDALFFHYSGHGGQAKATQGDEADGYNETIIPLDYQQAGQIEDDELHAIMVRPLPVGCRLTAIFDSCHSGTALDLPYVYTTSGNVKEPNVIAGVGKGIMGAAMNYARGDVLGMAKGLFSTFTTAKNTSGAEEVTKQTRSSGADVVMLSGCKDSQTSADATEAGKATGACSFAFLSVMNQYPQLTYKQMLNAVRDVLASKYSQKPQLSSSHPIDMDLLFVV.

Residues 1 to 79 (MAYPGQGGHH…FAPPSGPIGP (79 aa)) are disordered. Residues 23 to 45 (PAPHGYAQPGYGYAPPSGPPQGY) are compositionally biased toward low complexity. Catalysis depends on residues histidine 193 and cysteine 249.

Belongs to the peptidase C14B family.

Functionally, involved in cell death (apoptosis). This chain is Metacaspase-1 (MCA1), found in Mycosarcoma maydis (Corn smut fungus).